We begin with the raw amino-acid sequence, 148 residues long: Large ribosomal subunit protein uL15 (148 aa).

The interval 18–38 (GYGRVGKHRKHPGGRGNAGGL) is disordered.

The protein belongs to the universal ribosomal protein uL15 family.

The sequence is that of Large ribosomal subunit protein uL15 (rpl27a) from Dictyostelium discoideum (Social amoeba).